We begin with the raw amino-acid sequence, 428 residues long: Gamma-glutamyl phosphate reductase (428 aa).

The protein belongs to the gamma-glutamyl phosphate reductase family.

It localises to the cytoplasm. It catalyses the reaction L-glutamate 5-semialdehyde + phosphate + NADP(+) = L-glutamyl 5-phosphate + NADPH + H(+). It participates in amino-acid biosynthesis; L-proline biosynthesis; L-glutamate 5-semialdehyde from L-glutamate: step 2/2. Its function is as follows. Catalyzes the NADPH-dependent reduction of L-glutamate 5-phosphate into L-glutamate 5-semialdehyde and phosphate. The product spontaneously undergoes cyclization to form 1-pyrroline-5-carboxylate. The sequence is that of Gamma-glutamyl phosphate reductase from Streptomyces coelicolor (strain ATCC BAA-471 / A3(2) / M145).